Here is a 620-residue protein sequence, read N- to C-terminus: FAD-linked oxidoreductase notD (620 aa).

The N-terminal stretch at 1–21 (MHYIRELLIVVFTSCPALSYA) is a signal peptide. N-linked (GlcNAc...) asparagine glycosylation is found at asparagine 50, asparagine 86, and asparagine 109. The FAD-binding PCMH-type domain maps to 124–313 (SQGRIPRYSA…TSVTMPVFGA (190 aa)). The N-linked (GlcNAc...) asparagine glycan is linked to asparagine 403.

Belongs to the oxygen-dependent FAD-linked oxidoreductase family. Requires FAD as cofactor.

It participates in alkaloid biosynthesis. In terms of biological role, FAD-linked oxidoreductase; part of the gene cluster that mediates the biosynthesis of notoamide, a fungal indole alkaloid that belongs to a family of natural products containing a characteristic bicyclo[2.2.2]diazaoctane core. The first step of notoamide biosynthesis involves coupling of L-proline and L-tryptophan by the bimodular NRPS notE, to produce cyclo-L-tryptophan-L-proline called brevianamide F. The reverse prenyltransferase notF then acts as a deoxybrevianamide E synthase and converts brevianamide F to deoxybrevianamide E via reverse prenylation at C-2 of the indole ring leading to the bicyclo[2.2.2]diazaoctane core. Deoxybrevianamide E is further hydroxylated at C-6 of the indole ring, likely catalyzed by the cytochrome P450 monooxygenase notG, to yield 6-hydroxy-deoxybrevianamide E. 6-hydroxy-deoxybrevianamide E is a specific substrate of the prenyltransferase notC for normal prenylation at C-7 to produce 6-hydroxy-7-prenyl-deoxybrevianamide, also called notoamide S. As the proposed pivotal branching point in notoamide biosynthesis, notoamide S can be diverted to notoamide E through an oxidative pyran ring closure putatively catalyzed by either notH cytochrome P450 monooxygenase or the notD FAD-linked oxidoreductase. This step would be followed by an indole 2,3-epoxidation-initiated pinacol-like rearrangement catalyzed by the notB FAD-dependent monooxygenase leading to the formation of notoamide C and notoamide D. On the other hand notoamide S is converted to notoamide T by notH (or notD), a bifunctional oxidase that also functions as the intramolecular Diels-Alderase responsible for generation of (+)-notoamide T. To generate antipodal (-)-notoaminide T, notH' (or notD') in Aspergillus versicolor is expected to catalyze a Diels-Alder reaction leading to the opposite stereochemistry. The remaining oxidoreductase notD (or notH) likely catalyzes the oxidative pyran ring formation to yield (+)-stephacidin A. The FAD-dependent monooxygenase notI is highly similar to notB and is predicted to catalyze a similar conversion from (+)-stephacidin A to (-)-notoamide B via the 2,3-epoxidation of (+)-stephacidin A followed by a pinacol-type rearrangement. Finally, it remains unclear which enzyme could be responsible for the final hydroxylation steps leading to notoamide A and sclerotiamide. The polypeptide is FAD-linked oxidoreductase notD (Aspergillus sp. (strain MF297-2)).